A 336-amino-acid polypeptide reads, in one-letter code: N-acetyl-gamma-glutamyl-phosphate reductase (336 aa).

The active site involves C144.

This sequence belongs to the NAGSA dehydrogenase family. Type 1 subfamily.

It is found in the cytoplasm. The catalysed reaction is N-acetyl-L-glutamate 5-semialdehyde + phosphate + NADP(+) = N-acetyl-L-glutamyl 5-phosphate + NADPH + H(+). The protein operates within amino-acid biosynthesis; L-arginine biosynthesis; N(2)-acetyl-L-ornithine from L-glutamate: step 3/4. In terms of biological role, catalyzes the NADPH-dependent reduction of N-acetyl-5-glutamyl phosphate to yield N-acetyl-L-glutamate 5-semialdehyde. The chain is N-acetyl-gamma-glutamyl-phosphate reductase from Methanosarcina acetivorans (strain ATCC 35395 / DSM 2834 / JCM 12185 / C2A).